Reading from the N-terminus, the 332-residue chain is 3-dehydrosphinganine reductase (332 aa).

An N-terminal signal peptide occupies residues 1–25 (MLLVVAAFIVAFVLLLYMISPLISP). Residues glycine 39, serine 41, serine 42, glycine 43, arginine 64, aspartate 65, lysine 68, and aspartate 93 each contribute to the NADPH site. The GXSXG motif lies at 39-43 (GGSSG). Catalysis depends on serine 172, which acts as the Proton donor. The Proton acceptor role is filled by tyrosine 186. Positions 186 and 190 each coordinate NADP(+). Residue lysine 190 is the Lowers pKa of active site Tyr of the active site.

Belongs to the short-chain dehydrogenases/reductases (SDR) family.

Its subcellular location is the endoplasmic reticulum. It catalyses the reaction sphinganine + NADP(+) = 3-oxosphinganine + NADPH + H(+). It participates in lipid metabolism; sphingolipid metabolism. Functionally, catalyzes the reduction of 3'-oxosphinganine (3-ketodihydrosphingosine/KDS) to sphinganine (dihydrosphingosine/DHS), the second step of de novo sphingolipid biosynthesis. This chain is 3-dehydrosphinganine reductase (kdsr), found in Danio rerio (Zebrafish).